Consider the following 304-residue polypeptide: Ribosomal RNA small subunit methyltransferase H (304 aa).

Residues G37 to H39, D57, F79, D100, and H107 each bind S-adenosyl-L-methionine.

This sequence belongs to the methyltransferase superfamily. RsmH family.

It is found in the cytoplasm. The enzyme catalyses cytidine(1402) in 16S rRNA + S-adenosyl-L-methionine = N(4)-methylcytidine(1402) in 16S rRNA + S-adenosyl-L-homocysteine + H(+). Functionally, specifically methylates the N4 position of cytidine in position 1402 (C1402) of 16S rRNA. This Bacteroides fragilis (strain YCH46) protein is Ribosomal RNA small subunit methyltransferase H.